The sequence spans 4076 residues: E3 ubiquitin-protein ligase TOM1-like (4076 aa).

The span at 225 to 237 (SSAAPAVSAGSTA) shows a compositional bias: low complexity. Disordered stretches follow at residues 225-256 (SSAA…KNVA), 288-360 (YPDT…RDGP), 748-819 (IPAE…ILPS), 921-970 (LEAP…NKPA), 1083-1103 (SPVQ…SSGT), 1571-1646 (MALD…ITRE), 1988-2041 (PADA…KRPI), 2067-2110 (NVPA…KLAK), 2275-2295 (EGDK…IGRS), 2356-2551 (SGTA…ELDY), 2581-2634 (GDDL…LLAP), 2782-2817 (IPIP…ESTH), 2858-2955 (EKAR…QAED), 3037-3066 (EQHE…ASIL), 3105-3132 (RQLH…GAGT), 3216-3241 (KQLK…NNNG), and 3353-3444 (EEQA…QLTP). Basic and acidic residues predominate over residues 238–250 (KAKDKEKEKEKAT). Positions 311–320 (TTSSPAAPTP) are enriched in low complexity. The segment covering 322 to 343 (RRSSTMNVSQSSRTQRVGSSEE) has biased composition (polar residues). Positions 767-778 (EGNDADDDSEDD) are enriched in acidic residues. The span at 940–950 (VKGKGKEKATD) shows a compositional bias: basic and acidic residues. The segment covering 959 to 969 (ASSSSSGNNKP) has biased composition (polar residues). Residues 1606–1620 (PGTSRETNVGASTTA) are compositionally biased toward polar residues. Residues 1621-1632 (PQQLPVLPSQQP) show a composition bias toward low complexity. The span at 1633–1642 (ATESQSNTPR) shows a compositional bias: polar residues. Over residues 2021-2041 (VTDKDMHDAPKNPAQDLKRPI) the composition is skewed to basic and acidic residues. The segment covering 2086–2096 (NEATPSPSGDE) has biased composition (polar residues). Basic and acidic residues predominate over residues 2099–2110 (SESKEKEKKLAK). 2 stretches are compositionally biased toward acidic residues: residues 2378-2387 (DLTDDREETP) and 2405-2450 (EFSD…DLGE). Positions 2460–2469 (QPGVVEVLMG) are enriched in low complexity. Acidic residues-rich tracts occupy residues 2470-2516 (ENDD…DLED) and 2523-2551 (EEGN…ELDY). Over residues 2587–2597 (EPIRDFDGHYI) the composition is skewed to basic and acidic residues. The span at 2598-2622 (DDDEDGEEDDDEDEGEDDMDDDMYF) shows a compositional bias: acidic residues. Basic and acidic residues-rich tracts occupy residues 2788–2803 (HSRE…DTYQ) and 2858–2912 (EKAR…ERAE). Residues 2851 to 2929 (AIQAEKEEKA…QAAADQEANA (79 aa)) are a coiled coil. Over residues 2913-2927 (AAAQAAAQAAADQEA) the composition is skewed to low complexity. Positions 3037-3047 (EQHEQRRRERQ) are enriched in basic and acidic residues. Residues 3108–3117 (HAQQGGQAAS) are compositionally biased toward polar residues. A coiled-coil region spans residues 3341–3375 (PLQAIERRRKEAEEQAKKKKEAEEKAATEREAANA). Residues 3353–3372 (EEQAKKKKEAEEKAATEREA) are compositionally biased toward basic and acidic residues. Over residues 3373-3414 (ANAPEEQASTSTEQTPAQQEATQQPSESTPAAASGQQPAQQD) the composition is skewed to low complexity. The span at 3415-3439 (QENKELEAPKEKADEKDVQSDEKKI) shows a compositional bias: basic and acidic residues. An HECT domain is found at 3740-4076 (KADELKFGKL…TAGSDYFGFA (337 aa)). Cysteine 4043 functions as the Glycyl thioester intermediate in the catalytic mechanism.

It belongs to the UPL family. TOM1/PTR1 subfamily.

Its subcellular location is the nucleus. It carries out the reaction S-ubiquitinyl-[E2 ubiquitin-conjugating enzyme]-L-cysteine + [acceptor protein]-L-lysine = [E2 ubiquitin-conjugating enzyme]-L-cysteine + N(6)-ubiquitinyl-[acceptor protein]-L-lysine.. It participates in protein modification; protein ubiquitination. Its function is as follows. Probable ubiquitin ligase protein, which may be involved in mRNA export. E3 ubiquitin ligase proteins mediate ubiquitination and subsequent proteasomal degradation of target proteins. Participates in mRNA export from the nucleus by regulating the transport of hnRNP proteins. This chain is E3 ubiquitin-protein ligase TOM1-like, found in Neurospora crassa (strain ATCC 24698 / 74-OR23-1A / CBS 708.71 / DSM 1257 / FGSC 987).